The following is a 624-amino-acid chain: Glutamine--fructose-6-phosphate aminotransferase [isomerizing] (624 aa).

The Nucleophile; for GATase activity role is filled by cysteine 2. The Glutamine amidotransferase type-2 domain occupies 2–225 (CGIVGYVGRR…QDQAVVITAD (224 aa)). 2 consecutive SIS domains span residues 297 to 436 (SDQE…ARGT) and 469 to 614 (LAHR…VDKP). The active-site For Fru-6P isomerization activity is the lysine 619.

Homodimer.

It localises to the cytoplasm. The enzyme catalyses D-fructose 6-phosphate + L-glutamine = D-glucosamine 6-phosphate + L-glutamate. Its function is as follows. Catalyzes the first step in hexosamine metabolism, converting fructose-6P into glucosamine-6P using glutamine as a nitrogen source. The chain is Glutamine--fructose-6-phosphate aminotransferase [isomerizing] from Mycobacterium bovis (strain ATCC BAA-935 / AF2122/97).